Consider the following 117-residue polypeptide: Ribonuclease P protein component (117 aa).

It belongs to the RnpA family. In terms of assembly, consists of a catalytic RNA component (M1 or rnpB) and a protein subunit.

It catalyses the reaction Endonucleolytic cleavage of RNA, removing 5'-extranucleotides from tRNA precursor.. Functionally, RNaseP catalyzes the removal of the 5'-leader sequence from pre-tRNA to produce the mature 5'-terminus. It can also cleave other RNA substrates such as 4.5S RNA. The protein component plays an auxiliary but essential role in vivo by binding to the 5'-leader sequence and broadening the substrate specificity of the ribozyme. This Desulforapulum autotrophicum (strain ATCC 43914 / DSM 3382 / VKM B-1955 / HRM2) (Desulfobacterium autotrophicum) protein is Ribonuclease P protein component.